A 122-amino-acid polypeptide reads, in one-letter code: Large ribosomal subunit protein uL18 (122 aa).

It belongs to the universal ribosomal protein uL18 family. In terms of assembly, part of the 50S ribosomal subunit; part of the 5S rRNA/L5/L18/L25 subcomplex. Contacts the 5S and 23S rRNAs.

In terms of biological role, this is one of the proteins that bind and probably mediate the attachment of the 5S RNA into the large ribosomal subunit, where it forms part of the central protuberance. In Hydrogenobaculum sp. (strain Y04AAS1), this protein is Large ribosomal subunit protein uL18.